The sequence spans 249 residues: ATP synthase subunit a (249 aa).

Transmembrane regions (helical) follow at residues 30–50, 84–104, 113–133, 143–163, 196–216, and 221–241; these read SAYMLLAVAIISLLMIGGSAG, FFPLVFSLFMFIMVSNMVGII, HIIVTAALAFLVFFTVLIYGF, IFVPSGVPGFILPLVVFIEVF, LLAGLGIAGYFGAVLPLGMVV, and LELLVAFLQAYVFAILTCIYL.

This sequence belongs to the ATPase A chain family. F-type ATPases have 2 components, CF(1) - the catalytic core - and CF(0) - the membrane proton channel. CF(1) has five subunits: alpha(3), beta(3), gamma(1), delta(1), epsilon(1). CF(0) has four main subunits: a, b, b' and c.

Its subcellular location is the cell inner membrane. Its function is as follows. Key component of the proton channel; it plays a direct role in the translocation of protons across the membrane. This Rhodopseudomonas palustris (strain BisA53) protein is ATP synthase subunit a.